Consider the following 787-residue polypeptide: Longitudinals lacking protein, isoforms A/B/D/L (787 aa).

The 66-residue stretch at 32-97 (VDCTLAAEGK…MYRGEVNISQ (66 aa)) folds into the BTB domain. Disordered stretches follow at residues 115–200 (LSDN…SSVL), 228–340 (SSGP…ASAS), 506–560 (AKDV…SGGK), and 653–677 (TTGS…SVLG). Low complexity-rich tracts occupy residues 162–175 (SGDV…SSSP), 228–251 (SSGP…LTST), 263–293 (TSST…QTTS), 329–340 (NSATGPNPASAS), 537–560 (HSSS…SGGK), and 659–668 (SPSNSGHNNS). The segment at 685–707 (HPCPVCGRVYKLKSSLRNHQKWE) adopts a C2H2-type 1; degenerate zinc-finger fold. The C2H2-type 2 zinc-finger motif lies at 714–737 (FQCPFCVYRAKQKMHIGRHMERMH).

Isoform D interacts with JIL-1. By stage 11, isoform B is expressed throughout the mesoderm, whereas isoform A, isoform D and isoform L are expressed throughout the ectoderm. Expression becomes restricted during later stages; starting from stage 14 to 16, isoform B is expressed in muscle. Isoform A, isoform D, and at low levels isoform B, are expressed in the CNS. Expression is also seen in specific types of cells in the embryo; isoform A and isoform L are expressed in a dynamic pattern in the ventral neurogenic region starting at stage 7. Isoform L is expressed around the tracheal pits at stage 11.

The protein resides in the nucleus. Its function is as follows. Putative transcription factor required for axon growth and guidance in the central and peripheral nervous systems. Repels CNS axons away from the midline by promoting the expression of the midline repellent sli and its receptor robo. This chain is Longitudinals lacking protein, isoforms A/B/D/L, found in Drosophila melanogaster (Fruit fly).